Reading from the N-terminus, the 150-residue chain is UPF0179 protein Mbur_1033 (150 aa).

This sequence belongs to the UPF0179 family.

The chain is UPF0179 protein Mbur_1033 from Methanococcoides burtonii (strain DSM 6242 / NBRC 107633 / OCM 468 / ACE-M).